Here is a 441-residue protein sequence, read N- to C-terminus: MSDFSQTVPELVAWARKNDFSISLPTERLAFLMAIATLNGERMDGEMSEGELIDAFRHVSQGFDQTSETITIRANNAINDLVRQRLLNRFTSEQAEGNAIYRLTPLGIGITDYYIRQREFSTLRLSMQLSIVAQELSRAADAAEEDGDEFHWHRNVFAPLKYSVAEIFDSIDLSQRVMDEQQQGVKDDIAALLNQDWRAAISSCEQLLTETSSTLRELQDTLEAAGDKLQTSLLSIQDTIMNNPHNLEFVDKLVFDLQNKLDRIVSWGQQTIDLWIGYDRHVHKFIRTAIDMDKNRVFAQRLRQSVQSYFDNPWALTFANADRLLDMRDEELTLRSEEVTGELPPELEYEEFSEMREQLIALVEQALHKYKAQQIPLDLSEVMREYLAQYPRSRHFDVARIVVDQAVRLGVADTDFTGLPALWQAINEYGAKVQAHVIDKY.

Residues 208-236 (LTETSSTLRELQDTLEAAGDKLQTSLLSI) are leucine-zipper.

It belongs to the MukF family. Interacts, and probably forms a ternary complex, with MukE and MukB via its C-terminal region. The complex formation is stimulated by calcium or magnesium. It is required for an interaction between MukE and MukB.

The protein resides in the cytoplasm. Its subcellular location is the nucleoid. Functionally, involved in chromosome condensation, segregation and cell cycle progression. May participate in facilitating chromosome segregation by condensation DNA from both sides of a centrally located replisome during cell division. Not required for mini-F plasmid partitioning. Probably acts via its interaction with MukB and MukE. Overexpression results in anucleate cells. It has a calcium binding activity. This Pectobacterium atrosepticum (strain SCRI 1043 / ATCC BAA-672) (Erwinia carotovora subsp. atroseptica) protein is Chromosome partition protein MukF.